The chain runs to 270 residues: Diaminopimelate epimerase (270 aa).

Substrate is bound by residues Asn-15, Gln-49, and Asn-66. Cys-75 acts as the Proton donor in catalysis. Residues 76–77 (GN), Asn-155, Asn-187, and 204–205 (ER) each bind substrate. Cys-213 (proton acceptor) is an active-site residue. 214-215 (GS) serves as a coordination point for substrate.

The protein belongs to the diaminopimelate epimerase family. In terms of assembly, homodimer.

Its subcellular location is the cytoplasm. It carries out the reaction (2S,6S)-2,6-diaminopimelate = meso-2,6-diaminopimelate. Its pathway is amino-acid biosynthesis; L-lysine biosynthesis via DAP pathway; DL-2,6-diaminopimelate from LL-2,6-diaminopimelate: step 1/1. In terms of biological role, catalyzes the stereoinversion of LL-2,6-diaminopimelate (L,L-DAP) to meso-diaminopimelate (meso-DAP), a precursor of L-lysine and an essential component of the bacterial peptidoglycan. The chain is Diaminopimelate epimerase from Rickettsia massiliae (strain Mtu5).